A 251-amino-acid polypeptide reads, in one-letter code: uncharacterized protein (251 aa).

This is an uncharacterized protein from Mycoplasma pneumoniae (strain ATCC 29342 / M129 / Subtype 1) (Mycoplasmoides pneumoniae).